The chain runs to 90 residues: MTRRIFCQKLGKEADALNYSPYPGELGERIYNHISEQAWQAWLSHQTMLINEYRLSLIDPKARQFLEQEMINFLFGTGSEKPAGYTSEKE.

The protein belongs to the Fe(2+)-trafficking protein family.

Functionally, could be a mediator in iron transactions between iron acquisition and iron-requiring processes, such as synthesis and/or repair of Fe-S clusters in biosynthetic enzymes. In Coxiella burnetii (strain CbuG_Q212) (Coxiella burnetii (strain Q212)), this protein is Probable Fe(2+)-trafficking protein.